A 309-amino-acid chain; its full sequence is MENCTEVTKFILLGLTSVPELQIPLFILFTFIYLLTLCGNLGMMLLILMDSCLHTPMYFFLSNLSLVDFGYSSAVTPKVMAGFLRGDKVISYNACAVQMFFFVALATVENYLLASMAYDRYAAVCKPLHYTTTMTASVGACLALGSYVCGFLNASFHIGGIFSLSFCKSNLVHHFFCDVPAVMALSCSDKHTSEVILVFMSSFNIFFVLLVIFISYLFIFITILKMHSAKGHQKALSTCASHFTAVSVFYGTVIFIYLQPSSSHSMDTDKMASVFYAMIIPMLNPVVYSLRNREVQNAFKKVLRRQKFL.

Over 1–23 the chain is Extracellular; sequence MENCTEVTKFILLGLTSVPELQI. Residue N3 is glycosylated (N-linked (GlcNAc...) asparagine). Residues 24-47 form a helical membrane-spanning segment; the sequence is PLFILFTFIYLLTLCGNLGMMLLI. Topologically, residues 48 to 55 are cytoplasmic; sequence LMDSCLHT. The chain crosses the membrane as a helical span at residues 56–77; that stretch reads PMYFFLSNLSLVDFGYSSAVTP. Residues 78–98 lie on the Extracellular side of the membrane; the sequence is KVMAGFLRGDKVISYNACAVQ. The cysteines at positions 95 and 187 are disulfide-linked. The helical transmembrane segment at 99–118 threads the bilayer; sequence MFFFVALATVENYLLASMAY. The Cytoplasmic segment spans residues 119-137; that stretch reads DRYAAVCKPLHYTTTMTAS. The helical transmembrane segment at 138–156 threads the bilayer; it reads VGACLALGSYVCGFLNASF. Topologically, residues 157-193 are extracellular; sequence HIGGIFSLSFCKSNLVHHFFCDVPAVMALSCSDKHTS. Residues 194 to 217 traverse the membrane as a helical segment; the sequence is EVILVFMSSFNIFFVLLVIFISYL. At 218–234 the chain is on the cytoplasmic side; the sequence is FIFITILKMHSAKGHQK. Residues 235–257 traverse the membrane as a helical segment; the sequence is ALSTCASHFTAVSVFYGTVIFIY. Residues 258-270 are Extracellular-facing; sequence LQPSSSHSMDTDK. Residues 271–290 form a helical membrane-spanning segment; sequence MASVFYAMIIPMLNPVVYSL. Topologically, residues 291 to 309 are cytoplasmic; sequence RNREVQNAFKKVLRRQKFL.

The protein belongs to the G-protein coupled receptor 1 family.

The protein resides in the cell membrane. Odorant receptor. The polypeptide is Olfactory receptor 5B2 (OR5B2) (Homo sapiens (Human)).